The following is an 819-amino-acid chain: DNA topoisomerase 4 subunit A (819 aa).

One can recognise a Topo IIA-type catalytic domain in the interval 30 to 496 (LPDIRDGLKP…QIIEIDTASL (467 aa)). Residue Tyr118 is the O-(5'-phospho-DNA)-tyrosine intermediate of the active site.

The protein belongs to the type II topoisomerase GyrA/ParC subunit family. ParC type 2 subfamily. As to quaternary structure, heterotetramer composed of ParC and ParE.

The protein resides in the cell membrane. It carries out the reaction ATP-dependent breakage, passage and rejoining of double-stranded DNA.. Functionally, topoisomerase IV is essential for chromosome segregation. It relaxes supercoiled DNA. Performs the decatenation events required during the replication of a circular DNA molecule. This chain is DNA topoisomerase 4 subunit A, found in Streptococcus pyogenes serotype M18 (strain MGAS8232).